The chain runs to 225 residues: Cytidylate kinase (225 aa).

Residue 12-20 participates in ATP binding; sequence GPSGAGKGT.

Belongs to the cytidylate kinase family. Type 1 subfamily.

It localises to the cytoplasm. The catalysed reaction is CMP + ATP = CDP + ADP. It catalyses the reaction dCMP + ATP = dCDP + ADP. This chain is Cytidylate kinase, found in Vibrio cholerae serotype O1 (strain ATCC 39315 / El Tor Inaba N16961).